A 542-amino-acid polypeptide reads, in one-letter code: Chaperonin GroEL (542 aa).

ATP is bound by residues 29 to 32, 86 to 90, Gly-413, 476 to 478, and Asp-492; these read TLGP, DGTTT, and NAA. Positions 523 to 542 are disordered; that stretch reads EPAAPAMPGGMDPSMMGGMM. Residues 526–542 are compositionally biased toward low complexity; it reads APAMPGGMDPSMMGGMM.

The protein belongs to the chaperonin (HSP60) family. Forms a cylinder of 14 subunits composed of two heptameric rings stacked back-to-back. Interacts with the co-chaperonin GroES.

Its subcellular location is the cytoplasm. It carries out the reaction ATP + H2O + a folded polypeptide = ADP + phosphate + an unfolded polypeptide.. Functionally, together with its co-chaperonin GroES, plays an essential role in assisting protein folding. The GroEL-GroES system forms a nano-cage that allows encapsulation of the non-native substrate proteins and provides a physical environment optimized to promote and accelerate protein folding. This chain is Chaperonin GroEL, found in Streptococcus uberis (strain ATCC BAA-854 / 0140J).